Here is a 471-residue protein sequence, read N- to C-terminus: Glutamate--tRNA ligase (471 aa).

The 'HIGH' region signature appears at 9–19 (PSPTGYLHVGG). Positions 98, 100, 125, and 127 each coordinate Zn(2+). The 'KMSKS' region motif lies at 237-241 (KLSKR). Lys240 serves as a coordination point for ATP.

It belongs to the class-I aminoacyl-tRNA synthetase family. Glutamate--tRNA ligase type 1 subfamily. In terms of assembly, monomer. Zn(2+) is required as a cofactor.

The protein resides in the cytoplasm. It carries out the reaction tRNA(Glu) + L-glutamate + ATP = L-glutamyl-tRNA(Glu) + AMP + diphosphate. Functionally, catalyzes the attachment of glutamate to tRNA(Glu) in a two-step reaction: glutamate is first activated by ATP to form Glu-AMP and then transferred to the acceptor end of tRNA(Glu). The polypeptide is Glutamate--tRNA ligase (Salmonella gallinarum (strain 287/91 / NCTC 13346)).